The primary structure comprises 75 residues: MKQDIHPKYKEVTVNCANCGNSFVTRSTRPTIKVDICNNCHPFYTGKQTLVDTAGRVERFNKRFAKSTAAQASAQ.

This sequence belongs to the bacterial ribosomal protein bL31 family. Type A subfamily. As to quaternary structure, part of the 50S ribosomal subunit.

Binds the 23S rRNA. This Pelodictyon phaeoclathratiforme (strain DSM 5477 / BU-1) protein is Large ribosomal subunit protein bL31.